We begin with the raw amino-acid sequence, 224 residues long: Deoxyribose-phosphate aldolase (224 aa).

D92 acts as the Proton donor/acceptor in catalysis. The active-site Schiff-base intermediate with acetaldehyde is K155. K184 serves as the catalytic Proton donor/acceptor.

It belongs to the DeoC/FbaB aldolase family. DeoC type 1 subfamily.

The protein resides in the cytoplasm. It catalyses the reaction 2-deoxy-D-ribose 5-phosphate = D-glyceraldehyde 3-phosphate + acetaldehyde. The protein operates within carbohydrate degradation; 2-deoxy-D-ribose 1-phosphate degradation; D-glyceraldehyde 3-phosphate and acetaldehyde from 2-deoxy-alpha-D-ribose 1-phosphate: step 2/2. Functionally, catalyzes a reversible aldol reaction between acetaldehyde and D-glyceraldehyde 3-phosphate to generate 2-deoxy-D-ribose 5-phosphate. The chain is Deoxyribose-phosphate aldolase from Clostridium perfringens (strain ATCC 13124 / DSM 756 / JCM 1290 / NCIMB 6125 / NCTC 8237 / Type A).